The following is a 364-amino-acid chain: tRNA 2-selenouridine synthase (364 aa).

Residues 14–137 (LLADTPLIDV…LRQTAIQATW (124 aa)) enclose the Rhodanese domain. C97 serves as the catalytic S-selanylcysteine intermediate.

This sequence belongs to the SelU family. Monomer.

The catalysed reaction is 5-methylaminomethyl-2-thiouridine(34) in tRNA + selenophosphate + (2E)-geranyl diphosphate + H2O + H(+) = 5-methylaminomethyl-2-selenouridine(34) in tRNA + (2E)-thiogeraniol + phosphate + diphosphate. It catalyses the reaction 5-methylaminomethyl-2-thiouridine(34) in tRNA + (2E)-geranyl diphosphate = 5-methylaminomethyl-S-(2E)-geranyl-thiouridine(34) in tRNA + diphosphate. It carries out the reaction 5-methylaminomethyl-S-(2E)-geranyl-thiouridine(34) in tRNA + selenophosphate + H(+) = 5-methylaminomethyl-2-(Se-phospho)selenouridine(34) in tRNA + (2E)-thiogeraniol. The enzyme catalyses 5-methylaminomethyl-2-(Se-phospho)selenouridine(34) in tRNA + H2O = 5-methylaminomethyl-2-selenouridine(34) in tRNA + phosphate. Functionally, involved in the post-transcriptional modification of the uridine at the wobble position (U34) of tRNA(Lys), tRNA(Glu) and tRNA(Gln). Catalyzes the conversion of 2-thiouridine (S2U-RNA) to 2-selenouridine (Se2U-RNA). Acts in a two-step process involving geranylation of 2-thiouridine (S2U) to S-geranyl-2-thiouridine (geS2U) and subsequent selenation of the latter derivative to 2-selenouridine (Se2U) in the tRNA chain. The protein is tRNA 2-selenouridine synthase of Salmonella choleraesuis (strain SC-B67).